We begin with the raw amino-acid sequence, 711 residues long: MLFRSVVNKPRFGCGHNGAPFTSPLQSLLQCYQCVKQDEHISYGDLGRAVPPFGCAFSTVPGMSHVLAVANEEGIVRLYDTECGDMQRLVVKEFMAHTNAVFDIAWVPGEHKLVTASGDQTAKLWDVKAGELIGECKGHQCSLKSVAFSKFERAVFSTGGRDGNIMVWDTRCNKKDGFYRQVNQITGAHNAIDKQTPSKVKKRKPSIRGLAPSVDSQQSVTVVIFQDEYTVISAGAVDGVVKIWDLRKNYSTYRQDPVPVKLFPYPGNSTRKLGYSSLVLDPTGTNLFASCTDDNVYMFNATGLKTDPVSVFRGHQNSTFYIKASVSPDGQFLLSGSSDHSAYIWQVSDPLAAPINLIGHCQEVTSVAWCQSDFTKIATCSDDNTVRIWRLNRSSEDSSESNKTDYVGWACKKKFEPSSMAAILCTPGKPSMIPSSSLMSSPTPATCAPSNTGDLPLPSSTPLSALLPTSKLQTPKRINNGGLGASPKQMSSSKISIKDWVTRTPKSSKGTDSKTPSPRKAFTPVEQYPIVSNARVQLPYEKRAKRRLETSSEDVEHVCLDNCCVMELEPRLKKSKLDLCSLNERDCRDDKCLRLSDLSKEFDQELSPSPSTSLHMNATDNPPTLSPLSEMKSDFVDKENSSPEKNWLSALGHKFKSDNSSPQFKSSSSPSSRNSTSKKHQPRNAPNSPVSVPTTPGSMRKICTYFFKKSE.

WD repeat units follow at residues 47-89, 96-135, and 138-178; these read GRAV…MQRL, AHTN…LIGE, and GHQC…KDGF. Residues 168–171 carry the DDB1-binding motif motif; that stretch reads WDTR. Positions 197–204 match the Nuclear localization signal motif; the sequence is PSKVKKRK. WD repeat units follow at residues 215–254, 270–309, 314–355, and 359–398; these read DSQQ…STYR, TRKL…TDPV, GHQN…AAPI, and GHCQ…SEDS. The DDB1-binding motif motif lies at 244–247; sequence WDLR. 2 disordered regions span residues 473-524 and 601-698; these read QTPK…AFTP and EFDQ…TPGS. 2 stretches are compositionally biased toward polar residues: residues 504–516 and 606–627; these read TPKS…SKTP and LSPS…TLSP. Residues 631–642 are compositionally biased toward basic and acidic residues; the sequence is MKSDFVDKENSS. Residues 658-675 show a composition bias toward low complexity; that stretch reads DNSSPQFKSSSSPSSRNS. Positions 684–697 are enriched in polar residues; sequence NAPNSPVSVPTTPG.

This sequence belongs to the WD repeat cdt2 family. As to quaternary structure, component of the DCX(DTL) E3 ubiquitin ligase complex, at least composed of cul4 (cul4a or cul4b), ddb1, dtl/cdt2 and rbx1.

The protein localises to the nucleus. It localises to the cytoplasm. Its subcellular location is the cytoskeleton. It is found in the microtubule organizing center. The protein resides in the centrosome. The protein localises to the chromosome. The protein operates within protein modification; protein ubiquitination. In terms of biological role, substrate-specific adapter of a DCX (DDB1-CUL4-X-box) E3 ubiquitin-protein ligase complex required for cell cycle control, DNA damage response and translesion DNA synthesis. The DCX(DTL) complex, also named CRL4(CDT2) complex, mediates the polyubiquitination and subsequent degradation of CDT1, CDKN1A/p21(CIP1), KMT5A and SDE2. CDT1 degradation in response to DNA damage is necessary to ensure proper cell cycle regulation of DNA replication. CDKN1A/p21(CIP1) degradation during S phase or following UV irradiation is essential to control replication licensing. KMT5A degradation is also important for a proper regulation of mechanisms such as TGF-beta signaling, cell cycle progression, DNA repair and cell migration. Most substrates require their interaction with PCNA for their polyubiquitination: substrates interact with PCNA via their PIP-box, and those containing the 'K+4' motif in the PIP box, recruit the DCX(DTL) complex, leading to their degradation. In undamaged proliferating cells, the DCX(DTL) complex also promotes the 'Lys-164' monoubiquitination of PCNA, thereby being involved in PCNA-dependent translesion DNA synthesis. May play a role in the regulation of the circadian clock. This Xenopus laevis (African clawed frog) protein is Denticleless protein homolog B (dtl-b).